Consider the following 602-residue polypeptide: Alpha-(1-&gt;6)-mannopyranosyltransferase B (602 aa).

13 helical membrane passes run 105–125 (IGTM…ALPV), 148–168 (MIVL…APLV), 190–210 (TFGA…QDIY), 244–264 (VPFI…SIAA), 274–294 (IVGG…AAGW), 320–340 (LILH…FLLV), 368–388 (GVLI…LGFV), 404–424 (VVAI…TVVV), 448–468 (WMSM…NLGL), 472–492 (TAAM…AFMV), 503–523 (IHAV…FPVV), 546–566 (LGVI…GLAL), and 571–591 (VFSI…VGWW).

It belongs to the MptA/B family.

It localises to the membrane. It functions in the pathway cell wall biogenesis; cell wall polysaccharide biosynthesis. Its function is as follows. Involved in the initiation of core alpha-(1-&gt;6) mannan biosynthesis of lipomannan (LM-A) and multi-mannosylated polymer (LM-B), extending triacylatedphosphatidyl-myo-inositol dimannoside (Ac1PIM2) and mannosylated glycolipid, 1,2-di-O-C16/C18:1-(alpha-D-mannopyranosyl)-(1-&gt;4)-(alpha-D-glucopyranosyluronic acid)-(1-&gt;3)-glycerol (Man1GlcAGroAc2), respectively. Catalyzes the addition of alpha-(1-&gt;6)-mannose residue. The sequence is that of Alpha-(1-&gt;6)-mannopyranosyltransferase B (mptB) from Corynebacterium glutamicum (strain ATCC 13032 / DSM 20300 / JCM 1318 / BCRC 11384 / CCUG 27702 / LMG 3730 / NBRC 12168 / NCIMB 10025 / NRRL B-2784 / 534).